The primary structure comprises 213 residues: NADH dehydrogenase [ubiquinone] iron-sulfur protein 7, mitochondrial (213 aa).

The transit peptide at 1–38 (MAVLSAPGLRGFRILGLRSSVGPAVQARGVHQSVATDG) directs the protein to the mitochondrion. Positions 31–53 (HQSVATDGPSSTQPALPKARAVA) are disordered. A compositionally biased stretch (polar residues) spans 33–44 (SVATDGPSSTQP). Residues Cys88 and Cys89 each contribute to the [4Fe-4S] cluster site. Residue Arg111 is modified to Hydroxyarginine. [4Fe-4S] cluster contacts are provided by Cys153 and Cys183.

This sequence belongs to the complex I 20 kDa subunit family. As to quaternary structure, core subunit of respiratory chain NADH dehydrogenase (Complex I) which is composed of 45 different subunits. This is a component of the iron-sulfur (IP) fragment of the enzyme. [4Fe-4S] cluster serves as cofactor. Hydroxylated at Arg-111 by NDUFAF5 early in the pathway of assembly of complex I, before the formation of the juncture between peripheral and membrane arms.

The protein localises to the mitochondrion inner membrane. It carries out the reaction a ubiquinone + NADH + 5 H(+)(in) = a ubiquinol + NAD(+) + 4 H(+)(out). In terms of biological role, core subunit of the mitochondrial membrane respiratory chain NADH dehydrogenase (Complex I) which catalyzes electron transfer from NADH through the respiratory chain, using ubiquinone as an electron acceptor. Essential for the catalytic activity of complex I. The protein is NADH dehydrogenase [ubiquinone] iron-sulfur protein 7, mitochondrial (NDUFS7) of Homo sapiens (Human).